A 62-amino-acid polypeptide reads, in one-letter code: Photosystem II reaction center protein Z (62 aa).

A run of 2 helical transmembrane segments spans residues A8–A28 and W41–V61.

It belongs to the PsbZ family. PSII is composed of 1 copy each of membrane proteins PsbA, PsbB, PsbC, PsbD, PsbE, PsbF, PsbH, PsbI, PsbJ, PsbK, PsbL, PsbM, PsbT, PsbX, PsbY, PsbZ, Psb30/Ycf12, peripheral proteins PsbO, CyanoQ (PsbQ), PsbU, PsbV and a large number of cofactors. It forms dimeric complexes.

It is found in the cellular thylakoid membrane. Its function is as follows. May control the interaction of photosystem II (PSII) cores with the light-harvesting antenna, regulates electron flow through the 2 photosystem reaction centers. PSII is a light-driven water plastoquinone oxidoreductase, using light energy to abstract electrons from H(2)O, generating a proton gradient subsequently used for ATP formation. The sequence is that of Photosystem II reaction center protein Z from Nostoc punctiforme (strain ATCC 29133 / PCC 73102).